The primary structure comprises 116 residues: Neuropeptide Y receptor type 1 (116 aa).

The chain crosses the membrane as a helical span at residues 1–6 (LVLIAV). Residues 7-24 (ERHQLIINPRGWRPSNRH) are Cytoplasmic-facing. Residues 25–45 (AYVGIAVIWVLAVASSLPFLI) traverse the membrane as a helical segment. The Extracellular segment spans residues 46–81 (YQVLTDEPFQNVTLDAFKDKYVCFDKFPSDSHRLSY). A glycan (N-linked (GlcNAc...) asparagine) is linked at Asn-56. A helical transmembrane segment spans residues 82-102 (TTLLLVLQYFGPLCFIFICYF). Residues 103 to 116 (KIYIRLKRRNNMMD) are Cytoplasmic-facing.

The protein belongs to the G-protein coupled receptor 1 family.

It localises to the cell membrane. In terms of biological role, receptor for neuropeptide Y and peptide YY. This chain is Neuropeptide Y receptor type 1 (NPY1R), found in Ovis aries (Sheep).